A 244-amino-acid chain; its full sequence is 7-cyano-7-deazaguanine synthase (244 aa).

14-24 (FSGGQDSATCV) contributes to the ATP binding site. Positions 202, 217, 220, and 223 each coordinate Zn(2+).

This sequence belongs to the QueC family. Zn(2+) is required as a cofactor.

The catalysed reaction is 7-carboxy-7-deazaguanine + NH4(+) + ATP = 7-cyano-7-deazaguanine + ADP + phosphate + H2O + H(+). It functions in the pathway purine metabolism; 7-cyano-7-deazaguanine biosynthesis. Catalyzes the ATP-dependent conversion of 7-carboxy-7-deazaguanine (CDG) to 7-cyano-7-deazaguanine (preQ(0)). The protein is 7-cyano-7-deazaguanine synthase of Burkholderia vietnamiensis (strain G4 / LMG 22486) (Burkholderia cepacia (strain R1808)).